A 348-amino-acid chain; its full sequence is Major outer membrane protein P.IB (348 aa).

A signal peptide spans 1–19 (MKKSLIALTLAALPVAAMA).

Belongs to the Gram-negative porin family. As to quaternary structure, homotrimer.

Its subcellular location is the cell outer membrane. In terms of biological role, serves as a slightly cation selective porin. Major antigen on the gonococcal cell surface and it may have pathogenic properties in addition to its porin activity. In Neisseria gonorrhoeae, this protein is Major outer membrane protein P.IB (porB).